The primary structure comprises 335 residues: Zinc finger protein CO3 (335 aa).

4 residues coordinate Zn(2+): Cys15, Cys18, Cys38, and His43. Residues 15–57 form a B box-type; atypical zinc finger; the sequence is CDSCRSAPCAFYCLADSAALCATCDADVHSVNPLARRHRRVPM. The segment at 141 to 179 is disordered; sequence AGEKEDASSSKDCSSSHGKSSEGSHEFAVPGEPVPERQG. The region spanning 268–310 is the CCT domain; sequence REARVHRYREKRKTRRFEKTIRYASRKAYAETRPRIKGRFAKR.

This sequence belongs to the CONSTANS family.

Its subcellular location is the nucleus. Functionally, probable transcription factor involved in the regulation of flowering time under short day (SD) conditions. Functions as a repressor of flowering under SD conditions, independently of HD1, EHD1, MADS50 and MADS51. Controls flowering time under SD conditions by negatively regulating the expression of HD3A and FTL. This Oryza sativa subsp. japonica (Rice) protein is Zinc finger protein CO3.